We begin with the raw amino-acid sequence, 880 residues long: Alanine--tRNA ligase (880 aa).

4 residues coordinate Zn(2+): His-567, His-571, Cys-669, and His-673.

It belongs to the class-II aminoacyl-tRNA synthetase family. Zn(2+) serves as cofactor.

It is found in the cytoplasm. The enzyme catalyses tRNA(Ala) + L-alanine + ATP = L-alanyl-tRNA(Ala) + AMP + diphosphate. Catalyzes the attachment of alanine to tRNA(Ala) in a two-step reaction: alanine is first activated by ATP to form Ala-AMP and then transferred to the acceptor end of tRNA(Ala). Also edits incorrectly charged Ser-tRNA(Ala) and Gly-tRNA(Ala) via its editing domain. This is Alanine--tRNA ligase from Bacillus cereus (strain ATCC 14579 / DSM 31 / CCUG 7414 / JCM 2152 / NBRC 15305 / NCIMB 9373 / NCTC 2599 / NRRL B-3711).